The primary structure comprises 214 residues: Protein PsaE (214 aa).

Residues 1–24 form the signal peptide; that stretch reads MSHCVVLNKLESVLIIGDSRYALS. The segment at residues 1 to 94 is a DNA-binding region (ompR/PhoB-type); it reads MSHCVVLNKL…YKNEGYSYQK (94 aa).

In terms of biological role, required for expression of pH 6 antigen. This Yersinia pseudotuberculosis serotype I (strain IP32953) protein is Protein PsaE (psaE).